A 63-amino-acid polypeptide reads, in one-letter code: Kappa-theraphotoxin-Gr3a (63 aa).

The first 21 residues, 1–21, serve as a signal peptide directing secretion; sequence MKTSVFVLVLGLVLLFAVSFA. Residues 22-29 constitute a propeptide that is removed on maturation; that stretch reads TEMEESAR. 3 cysteine pairs are disulfide-bonded: C31/C45, C38/C50, and C44/C57.

This sequence belongs to the neurotoxin 10 (Hwtx-1) family. 63 (VsTx1) subfamily. As to expression, expressed by the venom gland.

The protein resides in the secreted. In terms of biological role, inhibits sodium channels Nav1.7/SCN9A and potassium channels Kv11.1/KCNH2. Also binds the voltage-sensor domain of the potassium channel KvAP (from the archaeon Aeropyrum pernix) with very slow apparent binding kinetics and affects channel gating. Reaches its target by dynamically partitioning into anionic or zwitterionic headgroup lipid membranes. May bind to the open state of KvAP. The chain is Kappa-theraphotoxin-Gr3a from Grammostola rosea (Chilean rose tarantula).